The following is a 375-amino-acid chain: Growth/differentiation factor 8 (375 aa).

The signal sequence occupies residues 1 to 23; it reads MQKLQLCVYIYLFMLIVAGPVDL. The propeptide occupies 24–266; it reads NENSEQKENV…VTDTPKRSRR (243 aa). N-linked (GlcNAc...) asparagine glycosylation is present at Asn71. Disulfide bonds link Cys272-Cys282, Cys281-Cys340, Cys309-Cys372, and Cys313-Cys374.

Belongs to the TGF-beta family. Homodimer; disulfide-linked. Interacts with WFIKKN2, leading to inhibit its activity. Interacts with FSTL3. In terms of processing, synthesized as large precursor molecule that undergoes proteolytic cleavage to generate an N-terminal propeptide and a disulfide linked C-terminal dimer, which is the biologically active molecule. The circulating form consists of a latent complex of the C-terminal dimer and other proteins, including its propeptide, which maintain the C-terminal dimer in a latent, inactive state. Ligand activation requires additional cleavage of the prodomain by a tolloid-like metalloproteinase.

The protein localises to the secreted. Acts specifically as a negative regulator of skeletal muscle growth. The sequence is that of Growth/differentiation factor 8 (MSTN) from Pan paniscus (Pygmy chimpanzee).